We begin with the raw amino-acid sequence, 228 residues long: L-ribulose-5-phosphate 4-epimerase UlaF (228 aa).

Substrate contacts are provided by residues 26 to 27 (GN), 43 to 44 (SG), and 72 to 73 (SS). D74, H93, and H95 together coordinate Zn(2+). Catalysis depends on D118, which acts as the Proton donor/acceptor. H167 provides a ligand contact to Zn(2+). Y225 functions as the Proton donor/acceptor in the catalytic mechanism.

Belongs to the aldolase class II family. AraD/FucA subfamily. Zn(2+) serves as cofactor.

The catalysed reaction is L-ribulose 5-phosphate = D-xylulose 5-phosphate. The protein operates within cofactor degradation; L-ascorbate degradation; D-xylulose 5-phosphate from L-ascorbate: step 4/4. Catalyzes the isomerization of L-ribulose 5-phosphate to D-xylulose 5-phosphate. Is involved in the anaerobic L-ascorbate utilization. This chain is L-ribulose-5-phosphate 4-epimerase UlaF, found in Escherichia coli O81 (strain ED1a).